We begin with the raw amino-acid sequence, 604 residues long: Glucose-methanol-choline family oxidoreductase mfmG (604 aa).

The N-terminal stretch at 1–24 (MYMLRPSSLLLATGLLNQGSSVLA) is a signal peptide. A glycan (N-linked (GlcNAc...) asparagine) is linked at asparagine 32. FAD contacts are provided by residues 44–45 (TA) and 65–66 (EA). N-linked (GlcNAc...) asparagine glycans are attached at residues asparagine 76 and asparagine 97. FAD is bound at residue 126–129 (NFMA). N-linked (GlcNAc...) asparagine glycans are attached at residues asparagine 260, asparagine 265, asparagine 401, and asparagine 460. The Proton acceptor role is filled by histidine 538. FAD is bound by residues alanine 572 and 584–585 (PQ).

This sequence belongs to the GMC oxidoreductase family. As to quaternary structure, homodimer. FAD is required as a cofactor.

Functionally, oxidoreductase; part of the gene cluster that mediates the biosynthesis of the phthalide-terpenoid hybrid 11'-O-desmethylfendlerol. MfmG seems not to be involved directly in the biosynthesis of 11'-O-desmethylfendlerol and its role has still to be determined. The biosynthesis of 11'-O-desmethylfendlerol begins with the NR-PKS mfmB that forms 3,5-dimethylorsellinic acid (DMOA), which is then transformed into the phthalide 5,7-dihydroxy-4-(hydroxymethyl)-6-methylphthalide by the cytochrome P450 monooxygenase mfmA and the hydrolase mfmC. Subsequently, the methyltransferase mfmE catalyzes 7-O-methylation to yield 5-hydroxy-4-(hydroxymethyl)-7-methoxy-6-methylphthalide, which undergoes C-3 hydroxylation by the cytochrome P450 monooxygenase mfmF. The resultant cyclopolic acid (2,5-dihydroxy-4-(hydroxymethyl)-7-methoxy-6-methylphthalide) is then farnesylated by the DMATS-type prenyltransferase mfmD to afford 5-O-farnesylcyclopolic acid. Finally, the Pyr4-family terpene cyclase mfmH cyclizes the farnesyl moiety of 5-O-farnesylcyclopolic acid into a drimane-like structure, thus completing the biosynthesis of 11'-O-desmethylfendlerol. This Annulohypoxylon moriforme (Filamentous fungus) protein is Glucose-methanol-choline family oxidoreductase mfmG.